The chain runs to 370 residues: uncharacterized protein (370 aa).

A run of 10 helical transmembrane segments spans residues 6 to 26, 49 to 69, 79 to 99, 111 to 131, 143 to 163, 167 to 187, 206 to 226, 236 to 256, 307 to 327, and 333 to 353; these read AVVF…CLGN, IGIV…VAPF, SFAN…GEMA, FLGT…LGII, ILIG…CAGF, MIGK…FGLW, MVAI…IVLI, IQTT…TAFI, VAFA…VAGM, and AAMI…AAWM.

Belongs to the EutH family.

The protein localises to the cell membrane. This is an uncharacterized protein from Bacillus subtilis (strain 168).